Here is a 354-residue protein sequence, read N- to C-terminus: uncharacterized protein (354 aa).

Disordered regions lie at residues 1-74 (MGTK…ENCR) and 87-115 (SESGVCTEPEERGQGGKKSQFLPINQRAS). Residue Lys-19 is modified to N6-acetyllysine. A compositionally biased stretch (low complexity) spans 32–41 (EGPSSNSSFH). Residues 45 to 54 (EEGTDLEGDM) show a composition bias toward acidic residues. Residues Ser-115 and Ser-174 each carry the phosphoserine modification. The span at 182–199 (QGSSQDLPMQANLSQSNE) shows a compositional bias: polar residues. Disordered regions lie at residues 182-208 (QGSSQDLPMQANLSQSNEGPLLAGRDR) and 235-298 (QVAD…DELS). Tyr-291 bears the Phosphotyrosine mark. Ser-292 is modified (phosphoserine).

This is an uncharacterized protein from Mus musculus (Mouse).